A 113-amino-acid polypeptide reads, in one-letter code: Hydrogenase maturation factor HypA (113 aa).

Histidine 2 contributes to the Ni(2+) binding site. 4 residues coordinate Zn(2+): cysteine 73, cysteine 76, cysteine 89, and cysteine 92.

It belongs to the HypA/HybF family.

Involved in the maturation of [NiFe] hydrogenases. Required for nickel insertion into the metal center of the hydrogenase. The sequence is that of Hydrogenase maturation factor HypA from Picosynechococcus sp. (strain ATCC 27264 / PCC 7002 / PR-6) (Agmenellum quadruplicatum).